The primary structure comprises 99 residues: Biogenesis of lysosome-related organelles complex 1 subunit SNN1 (99 aa).

A coiled-coil region spans residues 34–94 (SINELRESQA…VVLKRYEKMV (61 aa)).

It belongs to the SNAPIN family. Component of the biogenesis of lysosome-related organelles complex-1 (BLOC-1).

The protein resides in the endosome. Component of the biogenesis of lysosome-related organelles complex-1 (BLOC-1), a complex involved in endosomal cargo sorting. This Kluyveromyces lactis (strain ATCC 8585 / CBS 2359 / DSM 70799 / NBRC 1267 / NRRL Y-1140 / WM37) (Yeast) protein is Biogenesis of lysosome-related organelles complex 1 subunit SNN1 (SNN1).